The chain runs to 263 residues: Ribonuclease HII (263 aa).

The 192-residue stretch at 71-262 (QAIAGIDEVG…VKSMCCNSTN (192 aa)) folds into the RNase H type-2 domain. A divalent metal cation is bound by residues Asp-77, Glu-78, and Asp-172.

The protein belongs to the RNase HII family. Mn(2+) serves as cofactor. Requires Mg(2+) as cofactor.

It is found in the cytoplasm. It carries out the reaction Endonucleolytic cleavage to 5'-phosphomonoester.. In terms of biological role, endonuclease that specifically degrades the RNA of RNA-DNA hybrids. The protein is Ribonuclease HII of Streptococcus pyogenes serotype M2 (strain MGAS10270).